A 195-amino-acid polypeptide reads, in one-letter code: Translation initiation factor IF-3 (195 aa).

The interval 158 to 195 (EQSEVQQRPKREGRNMIMFLSPRKTPLIKKEEDAKENN) is disordered. The span at 185–195 (IKKEEDAKENN) shows a compositional bias: basic and acidic residues.

This sequence belongs to the IF-3 family. In terms of assembly, monomer.

Its subcellular location is the cytoplasm. Functionally, IF-3 binds to the 30S ribosomal subunit and shifts the equilibrium between 70S ribosomes and their 50S and 30S subunits in favor of the free subunits, thus enhancing the availability of 30S subunits on which protein synthesis initiation begins. The protein is Translation initiation factor IF-3 of Prochlorococcus marinus (strain MIT 9515).